Consider the following 24-residue polypeptide: Myotoxin TmC4-47.2 (24 aa).

The segment at 1-24 (KASSSAPKGWTHHGSRFTFHRGSM) is disordered. Positions 10–24 (WTHHGSRFTFHRGSM) are enriched in basic residues. The 12-residue stretch at 13–24 (HGSRFTFHRGSM) folds into the C-type lectin domain.

Expressed by the venom gland.

Its subcellular location is the secreted. Able to depolarize frog skeletal muscle fibers, but has no effects on squid giant axons. Tetrodotoxin is able to partially antagonize the depolarization. Induces myonecrosis. This Thalassophryne maculosa (Cano toadfish) protein is Myotoxin TmC4-47.2.